The chain runs to 122 residues: Small ribosomal subunit protein bS6 (122 aa).

The protein belongs to the bacterial ribosomal protein bS6 family.

In terms of biological role, binds together with bS18 to 16S ribosomal RNA. The sequence is that of Small ribosomal subunit protein bS6 (rpsF) from Neisseria meningitidis serogroup B (strain ATCC BAA-335 / MC58).